Reading from the N-terminus, the 108-residue chain is MPGHEITQQLDVVYGSTVRSKHVGRDLLAGLKNIVGGELTAYTELLEESRQEAMQRMIAKAQQLGANAIVGIRFSTSNIAQGASELFVYGTAVIVQPNAPKLPDPFNP.

This sequence belongs to the UPF0145 family.

The sequence is that of UPF0145 protein ACIAD2946 from Acinetobacter baylyi (strain ATCC 33305 / BD413 / ADP1).